A 195-amino-acid chain; its full sequence is Phosphoheptose isomerase (195 aa).

The region spanning 37 to 195 (ISDSFKQHGK…IEFEMAKIRQ (159 aa)) is the SIS domain. 52–54 (NGG) is a substrate binding site. Zn(2+) contacts are provided by His61 and Glu65. Residues Glu65, 93–94 (ND), 119–121 (STS), Ser124, and Gln172 each bind substrate. Positions 172 and 180 each coordinate Zn(2+).

Belongs to the SIS family. GmhA subfamily. As to quaternary structure, homotetramer. The cofactor is Zn(2+).

It localises to the cytoplasm. It carries out the reaction 2 D-sedoheptulose 7-phosphate = D-glycero-alpha-D-manno-heptose 7-phosphate + D-glycero-beta-D-manno-heptose 7-phosphate. It functions in the pathway carbohydrate biosynthesis; D-glycero-D-manno-heptose 7-phosphate biosynthesis; D-glycero-alpha-D-manno-heptose 7-phosphate and D-glycero-beta-D-manno-heptose 7-phosphate from sedoheptulose 7-phosphate: step 1/1. Catalyzes the isomerization of sedoheptulose 7-phosphate in D-glycero-D-manno-heptose 7-phosphate. The protein is Phosphoheptose isomerase of Histophilus somni (strain 2336) (Haemophilus somnus).